A 427-amino-acid polypeptide reads, in one-letter code: Glutamate-1-semialdehyde 2,1-aminomutase (427 aa).

At lysine 265 the chain carries N6-(pyridoxal phosphate)lysine.

This sequence belongs to the class-III pyridoxal-phosphate-dependent aminotransferase family. HemL subfamily. Homodimer. Pyridoxal 5'-phosphate serves as cofactor.

It is found in the cytoplasm. It carries out the reaction (S)-4-amino-5-oxopentanoate = 5-aminolevulinate. The protein operates within porphyrin-containing compound metabolism; protoporphyrin-IX biosynthesis; 5-aminolevulinate from L-glutamyl-tRNA(Glu): step 2/2. This chain is Glutamate-1-semialdehyde 2,1-aminomutase, found in Burkholderia pseudomallei (strain 668).